The following is a 43-amino-acid chain: Cuticle protein CP434 (43 aa).

2 repeat units span residues 1–18 (ALVGPSGMILADGTPVQF) and 25–42 (VLTGPSGIVFSNGQNIQL).

In terms of tissue distribution, calcified shell.

This chain is Cuticle protein CP434, found in Cancer pagurus (Rock crab).